The sequence spans 205 residues: Spermatogenesis-associated protein 24 (205 aa).

Residues 17–166 (LAFDQLRDVI…QQKQIFRNHM (150 aa)) are a coiled coil. A required for interaction with CBX5 and TBPL1 region spans residues 138–185 (EDILNGKENEIKELQQVISQQKQIFRNHMSDFRIQKQQESYMAQVLDQ). Positions 180-205 (AQVLDQKHKKASGTRQAHSHQHPREK) are disordered. Residues 186-205 (KHKKASGTRQAHSHQHPREK) are compositionally biased toward basic residues.

Belongs to the SPATA24 family. In terms of assembly, homodimer. Interacts with CBX3, CBX5, GMNN, GTF2B, TBPL1 and the polycomb proteins PHCF2, RNF2 and SCMH1 but not with CBX1 or PCGF2.

The protein resides in the cytoplasm. Its subcellular location is the nucleus. It is found in the nucleolus. It localises to the nucleoplasm. Functionally, binds DNA with high affinity but does not bind to TATA boxes. Synergises with GMNN and TBP in activation of TATA box-containing promoters and with GMNN and TBPL1 in activation of the NF1 TATA-less promoter. May play a role in cytoplasm movement and removal during spermiogenesis. This is Spermatogenesis-associated protein 24 (SPATA24) from Macaca fascicularis (Crab-eating macaque).